A 69-amino-acid polypeptide reads, in one-letter code: Conotoxin Eb6.1 (69 aa).

Residues 1–17 (VLIIAVLFLTACQLTTA) form the signal peptide. Positions 18-41 (ETYSRGRQKHRARRSTDKNSKWTR) are excised as a propeptide. Cystine bridges form between cysteine 43/cysteine 57, cysteine 50/cysteine 61, and cysteine 56/cysteine 68.

This sequence belongs to the conotoxin O1 superfamily. Expressed by the venom duct.

Its subcellular location is the secreted. The sequence is that of Conotoxin Eb6.1 (E1) from Conus ebraeus (Hebrew cone).